A 193-amino-acid chain; its full sequence is Ion-translocating oxidoreductase complex subunit A (193 aa).

The next 6 membrane-spanning stretches (helical) occupy residues 5-25 (ILFF…FLGL), 47-67 (FVIL…LLPL), 72-92 (LRII…EIVL), 102-122 (LLGI…IPLF), 134-154 (IFYG…FSCI), and 167-187 (FQGA…FMGF).

The protein belongs to the NqrDE/RnfAE family. As to quaternary structure, the complex is composed of six subunits: RnfA, RnfB, RnfC, RnfD, RnfE and RnfG.

Its subcellular location is the cell inner membrane. In terms of biological role, part of a membrane-bound complex that couples electron transfer with translocation of ions across the membrane. This is Ion-translocating oxidoreductase complex subunit A from Buchnera aphidicola subsp. Acyrthosiphon pisum (strain APS) (Acyrthosiphon pisum symbiotic bacterium).